Reading from the N-terminus, the 138-residue chain is Large ribosomal subunit protein uL16 (138 aa).

The protein belongs to the universal ribosomal protein uL16 family. In terms of assembly, part of the 50S ribosomal subunit.

Binds 23S rRNA and is also seen to make contacts with the A and possibly P site tRNAs. In Neisseria gonorrhoeae (strain ATCC 700825 / FA 1090), this protein is Large ribosomal subunit protein uL16.